A 570-amino-acid polypeptide reads, in one-letter code: Proline--tRNA ligase (570 aa).

It belongs to the class-II aminoacyl-tRNA synthetase family. ProS type 1 subfamily. Homodimer.

It is found in the cytoplasm. It carries out the reaction tRNA(Pro) + L-proline + ATP = L-prolyl-tRNA(Pro) + AMP + diphosphate. Functionally, catalyzes the attachment of proline to tRNA(Pro) in a two-step reaction: proline is first activated by ATP to form Pro-AMP and then transferred to the acceptor end of tRNA(Pro). As ProRS can inadvertently accommodate and process non-cognate amino acids such as alanine and cysteine, to avoid such errors it has two additional distinct editing activities against alanine. One activity is designated as 'pretransfer' editing and involves the tRNA(Pro)-independent hydrolysis of activated Ala-AMP. The other activity is designated 'posttransfer' editing and involves deacylation of mischarged Ala-tRNA(Pro). The misacylated Cys-tRNA(Pro) is not edited by ProRS. This Clostridium perfringens (strain SM101 / Type A) protein is Proline--tRNA ligase.